A 169-amino-acid chain; its full sequence is Regulator of sigma D (169 aa).

This sequence belongs to the Rsd/AlgQ family. As to quaternary structure, interacts with RpoD.

It localises to the cytoplasm. In terms of biological role, binds RpoD and negatively regulates RpoD-mediated transcription activation by preventing the interaction between the primary sigma factor RpoD with the catalytic core of the RNA polymerase and with promoter DNA. May be involved in replacement of the RNA polymerase sigma subunit from RpoD to RpoS during the transition from exponential growth to the stationary phase. The chain is Regulator of sigma D from Yersinia pseudotuberculosis serotype O:1b (strain IP 31758).